Consider the following 5255-residue polypeptide: SCO-spondin (5255 aa).

The signal sequence occupies residues 1–18; the sequence is MGIVATVLLWVVTEAARG. An EMI domain is found at 19–111; the sequence is RWCERTEQVT…ACCAGWSGPH (93 aa). N-linked (GlcNAc...) asparagine glycans are attached at residues Asn-97, Asn-136, Asn-156, and Asn-255. One can recognise a VWFD 1 domain in the interval 192–358; it reads ASCTVWAGSR…PDANPELSCS (167 aa). Intrachain disulfides connect Cys-194–Cys-317 and Cys-216–Cys-357. One can recognise a TIL 1 domain in the interval 453-508; sequence CGHGQRYSDCVSSCPASCMAAGTAEEGHCRDDCASGCECTPGLLLDRGACIPQSAC. The VWFC 1 domain maps to 508-601; the sequence is CPCLHRGHIY…CGGHQPLSCL (94 aa). Positions 546 to 717 constitute a VWFD 2 domain; sequence AECAVLGDLH…NKYRVSTDCP (172 aa). Disulfide bonds link Cys-548–Cys-681, Cys-570–Cys-716, and Cys-592–Cys-600. Asn-801 carries an N-linked (GlcNAc...) asparagine glycan. The region spanning 809-868 is the TIL 2 domain; it reads CRGGQVYQECSSPCGRTCADLRLDGASSCPSLDNICVSGCNCPEGPVLDDGGQCVPPGVC. In terms of domain architecture, VWFC 2 spans 868 to 926; the sequence is CPCQHSSQLYPAGSKIRQGCNACMCTAGTWSCTDAPCPDAAFCPGDLVYVFGSCLRTCD. Residues Asn-931 and Asn-972 are each glycosylated (N-linked (GlcNAc...) asparagine). The 171-residue stretch at 998–1168 folds into the VWFD 3 domain; it reads GTCVATGDPH…NSWRVSLLCP (171 aa). 3 disulfide bridges follow: Cys-1000/Cys-1132, Cys-1022/Cys-1167, and Cys-1043/Cys-1050. One can recognise a TIL 3 domain in the interval 1263–1319; sequence CDGGQEYSACGPPCPQTCRNLGLELPEHCDTMSCLEGCFCPEGKVLHEGSCIDPAEC. Asn-1340 is a glycosylation site (N-linked (GlcNAc...) asparagine). LDL-receptor class A domains follow at residues 1362–1398, 1400–1436, 1439–1477, 1479–1515, 1515–1551, and 1555–1593; these read HCPDSEFPCRSGGRCVPGAWLCDNEDDCGDGSDEVCA, HCAPHQHRCADGQCVPWGARCDGLSDCGDGSDERGCP, PCAPPEFRCASGRCIPRAHVCNGELDCGFADDSDEAGCS, SCSVGEFQCAAGRCVPYPHRCNGHDDCGDFSDERGCV, VCPAGHFQCPDAQCLPPAALCDGMQDCGDGTDEAFCP, and TCAPGQLPCPDGSCVSQVKLCDGIWDCRDGWDESSVRCM. Cystine bridges form between Cys-1363–Cys-1376, Cys-1370–Cys-1389, Cys-1383–Cys-1397, Cys-1401–Cys-1413, Cys-1408–Cys-1426, Cys-1420–Cys-1435, Cys-1440–Cys-1452, Cys-1447–Cys-1465, Cys-1459–Cys-1476, Cys-1480–Cys-1492, Cys-1487–Cys-1505, Cys-1499–Cys-1514, Cys-1516–Cys-1528, Cys-1523–Cys-1541, Cys-1535–Cys-1550, Cys-1556–Cys-1568, Cys-1563–Cys-1581, and Cys-1575–Cys-1592. N-linked (GlcNAc...) asparagine glycosylation is present at Asn-1610. LDL-receptor class A domains are found at residues 1616 to 1652, 1654 to 1693, and 1699 to 1734; these read VCGPYEFPCRSGQCVPRGWVCDSEADCPDNSDELGCN, SCVLGHFPCALGAHCIHYDHLCDGIPHCPDHSDESDDNCG, and PCPGHFVCNNRVCVNATRVCDGALDCPQGEDELACE. Intrachain disulfides connect Cys-1617–Cys-1629, Cys-1624–Cys-1642, and Cys-1636–Cys-1651. Asn-1652 carries an N-linked (GlcNAc...) asparagine glycan. Cystine bridges form between Cys-1655/Cys-1668, Cys-1662/Cys-1681, Cys-1675/Cys-1692, Cys-1700/Cys-1711, Cys-1706/Cys-1724, and Cys-1718/Cys-1733. A glycan (N-linked (GlcNAc...) asparagine) is linked at Asn-1713. Residue Asn-1743 is glycosylated (N-linked (GlcNAc...) asparagine). An LDL-receptor class A 10 domain is found at 1748-1790; that stretch reads PCAEYSCRDGDCITFKQVCNGLPDCRDGDMASGWLPSDEWDCG. 6 disulfide bridges follow: Cys-1749/Cys-1759, Cys-1754/Cys-1772, Cys-1766/Cys-1789, Cys-1801/Cys-1837, Cys-1805/Cys-1842, and Cys-1816/Cys-1827. TSP type-1 domains are found at residues 1789 to 1843 and 1845 to 1903; these read CGQW…TACP and DGAW…DGCP. N-linked (GlcNAc...) asparagine glycosylation is present at Asn-1856. 3 disulfide bridges follow: Cys-1857–Cys-1897, Cys-1861–Cys-1902, and Cys-1871–Cys-1881. In terms of domain architecture, TIL 4 spans 1907-1961; it reads CPGGLQPRPCAPCPASCADLASRAPCRREQCTPGCWCAEGLVLDGERGCVRPREC. EGF-like domains are found at residues 1919–1956 and 1957–1983; these read CPASCADLASRAPCRREQCTPGCWCAEGLVLDGERGCV and RPRECRCEVDGLRYWPGQRMKLNCRLC. The 59-residue stretch at 1961–2019 folds into the VWFC 3 domain; that stretch reads CRCEVDGLRYWPGQRMKLNCRLCTCLDGQPRRCRHNPACSVSCSWSAWSPWGECLGPCG. Residues 2002–2058 form the TSP type-1 3 domain; the sequence is SCSWSAWSPWGECLGPCGVQSIQWSFRSPSHPGKHGTNRQCRGIYRKARRCQTEPCQ. 3 cysteine pairs are disulfide-bonded: Cys-2003/Cys-2042, Cys-2014/Cys-2018, and Cys-2052/Cys-2057. The VWFC 4 domain occupies 2058 to 2120; that stretch reads QECEHQGRSR…GKGDSCCFCA (63 aa). 2 N-linked (GlcNAc...) asparagine glycosylation sites follow: Asn-2125 and Asn-2230. 4 disulfides stabilise this stretch: Cys-2162/Cys-2310, Cys-2328/Cys-2339, Cys-2335/Cys-2352, and Cys-2346/Cys-2361. In terms of domain architecture, F5/8 type C spans 2162–2310; sequence CYSPLGIASL…IFLRAELLGC (149 aa). Positions 2327-2362 constitute an LDL-receptor class A 11 domain; that stretch reads PCGTGEFWCGVSCVTASRRCDGATDCPGGADEAGCE. Residues 2352-2373 form a disordered region; that stretch reads CPGGADEAGCEPPSSTTLPTHP. Residues 2364 to 2373 show a composition bias toward polar residues; sequence PSSTTLPTHP. LDL-receptor class A domains lie at 2481-2517 and 2538-2574; these read LCPPDQFLCDALGCVDAAMVCDGQQDCLDGSDEAHCG and TCSPKQFSCGTGECLALEKRCDLSRDCADGSDESSCA. Disulfide bonds link Cys-2482–Cys-2494, Cys-2489–Cys-2507, Cys-2501–Cys-2516, Cys-2539–Cys-2551, Cys-2546–Cys-2564, Cys-2558–Cys-2573, Cys-2576–Cys-2612, Cys-2587–Cys-2591, Cys-2622–Cys-2627, Cys-2642–Cys-2679, Cys-2646–Cys-2684, and Cys-2657–Cys-2669. TSP type-1 domains lie at 2575–2628 and 2630–2685; these read DCIL…RACP and PGAW…QPCG. The TIL 5 domain occupies 2708-2750; that stretch reads PPCPQVCGDLSATSSCQSPCQEGCRCPPGLFLQEGTCVNASQC. A glycan (N-linked (GlcNAc...) asparagine) is linked at Asn-2746. TSP type-1 domains are found at residues 2790–2844, 2849–2903, and 2905–2958; these read ACAW…TPCA, SSGW…APCP, and AGVW…RPCG. 9 disulfides stabilise this stretch: Cys-2791–Cys-2829, Cys-2802–Cys-2806, Cys-2839–Cys-2843, Cys-2861–Cys-2897, Cys-2865–Cys-2902, Cys-2881–Cys-2887, Cys-2917–Cys-2952, Cys-2921–Cys-2957, and Cys-2932–Cys-2942. A TIL 6 domain is found at 2971 to 3020; it reads EECRHSEGRCPWICQDLGAGVACTAQCQPGCHCPAGLLLQNGTCVPPSHC. Asn-3011, Asn-3042, and Asn-3065 each carry an N-linked (GlcNAc...) asparagine glycan. A VWFC 5 domain is found at 3020-3077; the sequence is CLCHHRGHLYQPGDINALDTCNNCTCVTGQMVCSTETCPVPCTWSNWTAWSTCSHSCD. TSP type-1 domains lie at 3060–3115 and 3117–3158; these read PCTW…QPCR and VAPW…APCP. 3 disulfides stabilise this stretch: Cys-3061/Cys-3099, Cys-3072/Cys-3076, and Cys-3109/Cys-3114. Asn-3136 is a glycosylation site (N-linked (GlcNAc...) asparagine). Residues 3165-3217 form the TIL 7 domain; it reads CPPGKQWQACAQGAASCAELSAAPPADGSCHPGCYCPPGALLLNNECVAEAAC. Positions 3217-3275 constitute a VWFC 6 domain; it reads CPCAVDGVLYQPGDVVPQGCHNCSCIAGRVTNCSQEDCGDVDGPWTPWTPWSECSASCG. Residues Asn-3238 and Asn-3248 are each glycosylated (N-linked (GlcNAc...) asparagine). A TSP type-1 11 domain is found at 3258–3309; the sequence is DGPWTPWTPWSECSASCGPGRQRRYRFCSAHPGVPCAEPQPQERPCARQPCH. Intrachain disulfides connect Cys-3270/Cys-3303, Cys-3274/Cys-3308, and Cys-3285/Cys-3293. Asn-3350, Asn-3366, and Asn-3392 each carry an N-linked (GlcNAc...) asparagine glycan. TSP type-1 domains follow at residues 3410 to 3475 and 3477 to 3532; these read PGAW…PPCP and DGAW…SSCP. 6 disulfides stabilise this stretch: Cys-3422/Cys-3468, Cys-3426/Cys-3474, Cys-3437/Cys-3449, Cys-3489/Cys-3524, Cys-3492/Cys-3531, and Cys-3502/Cys-3514. The 56-residue stretch at 3534–3589 folds into the TIL 8 domain; it reads CAGGLVAFTCGKPCPHSCEDLREDTACMATPRCLPACACPHGQLLQDGDCVPPELC. Asn-3598 and Asn-3625 each carry an N-linked (GlcNAc...) asparagine glycan. TSP type-1 domains follow at residues 3644–3700 and 3702–3751; these read DGGW…EGCP and EEPW…HVCR. Intrachain disulfides connect Cys-3656–Cys-3693, Cys-3660–Cys-3699, Cys-3671–Cys-3683, Cys-3714–Cys-3745, Cys-3718–Cys-3750, and Cys-3729–Cys-3735. N-linked (GlcNAc...) asparagine glycosylation is found at Asn-3823 and Asn-3869. TSP type-1 domains lie at 3878–3934, 3951–4004, 4018–4074, and 4076–4131; these read DGGF…PECP, EEGF…PLCS, NCSW…QACK, and DGAW…QPCD. 6 disulfide bridges follow: Cys-3890/Cys-3928, Cys-3894/Cys-3933, Cys-3906/Cys-3918, Cys-3963/Cys-3998, Cys-3967/Cys-4003, and Cys-3982/Cys-3988. Residues 3932 to 3951 form a disordered region; the sequence is ECPAVPTTEPGPGVAGAEEE. The N-linked (GlcNAc...) asparagine glycan is linked to Asn-4018. 6 cysteine pairs are disulfide-bonded: Cys-4019–Cys-4055, Cys-4030–Cys-4034, Cys-4068–Cys-4073, Cys-4088–Cys-4125, Cys-4092–Cys-4130, and Cys-4103–Cys-4115. Residues 4134–4189 form the TIL 9 domain; the sequence is CPPGMALVTCANHCPRHCGDLQEGIVCREEEHCEPGCRCPNGTLEQDGGCVPLAHC. N-linked (GlcNAc...) asparagine glycans are attached at residues Asn-4174 and Asn-4211. TSP type-1 domains follow at residues 4230 to 4282, 4322 to 4384, and 4386 to 4433; these read RCPW…GPCP, GAEH…RPCP, and ECSW…SGCS. 3 disulfides stabilise this stretch: Cys-4231–Cys-4266, Cys-4242–Cys-4246, and Cys-4276–Cys-4281. Residue Asn-4362 is glycosylated (N-linked (GlcNAc...) asparagine). 3 disulfide bridges follow: Cys-4387-Cys-4417, Cys-4398-Cys-4400, and Cys-4427-Cys-4432. A glycan (N-linked (GlcNAc...) asparagine) is linked at Asn-4428. A TIL 10 domain is found at 4437-4492; the sequence is CEPPFEFQPCSPPCARLCSTLQHPELCPAQSHCLPGCFCPQGLLEQRSACVPPEQC. Residue Asn-4498 is glycosylated (N-linked (GlcNAc...) asparagine). 2 TSP type-1 domains span residues 4537–4608 and 4610–4662; these read LPLS…DICQ and LCLW…AVCP. 6 disulfide bridges follow: Cys-4548–Cys-4601, Cys-4551–Cys-4607, Cys-4575–Cys-4591, Cys-4611–Cys-4646, Cys-4622–Cys-4626, and Cys-4656–Cys-4661. The 48-residue stretch at 4675–4722 folds into the TIL 11 domain; sequence TTCANSCPRACADLWQHVECVQGGCKPGCRCPQGQLLQDGLCVPTAQC. Asn-4730, Asn-4747, and Asn-4752 each carry an N-linked (GlcNAc...) asparagine glycan. TSP type-1 domains are found at residues 4762 to 4815 and 4817 to 4869; these read CPSY…QPCP and GCQL…HNCT. Intrachain disulfides connect Cys-4774–Cys-4809, Cys-4778–Cys-4814, Cys-4789–Cys-4798, Cys-4818–Cys-4852, Cys-4829–Cys-4833, and Cys-4863–Cys-4868. Asn-4867 is a glycosylation site (N-linked (GlcNAc...) asparagine). The region spanning 4872–4926 is the TIL 12 domain; that stretch reads CPRSQVHRECANACPHACADLRPQTQCLPQPCQPGCACPPGQVLQDGACVPPEEC. Residues Asn-4939 and Asn-4970 are each glycosylated (N-linked (GlcNAc...) asparagine). The TSP type-1 27 domain occupies 4979–5033; the sequence is DCLWSPWSPWSPCSVTCGMGERLSHRHPLRQRLYEGAECLGPPVRRAACHLPDCA. 3 cysteine pairs are disulfide-bonded: Cys-4980–Cys-5017, Cys-4991–Cys-4995, and Cys-5027–Cys-5032. N-linked (GlcNAc...) asparagine glycans are attached at residues Asn-5081, Asn-5122, and Asn-5169. The region spanning 5092-5150 is the VWFC 7 domain; the sequence is CECLHQGQLHQPGSEWQEQCARCRCVDGKANCTDGCTPLSCPEGEVKVREPGRCCPVCR. Cystine bridges form between Cys-5161–Cys-5209, Cys-5175–Cys-5226, Cys-5185–Cys-5242, and Cys-5189–Cys-5244. The CTCK domain maps to 5161–5248; the sequence is CRRFTELRNI…IHSCECSSCQ (88 aa).

Belongs to the thrombospondin family.

It localises to the secreted. The protein localises to the extracellular space. In terms of biological role, involved in the modulation of neuronal aggregation. May be involved in developmental events during the formation of the central nervous system. This is SCO-spondin (SSPO) from Gallus gallus (Chicken).